A 352-amino-acid chain; its full sequence is MASWPPLELQSSNQSQLFPQNATACDNAPEAWDLLHRVLPTFIISICSFGLLGNLFVLLVFLLPRRRLNVAEIYLANLAASDLVFVLGLPFWAENIWNQFNWPFGALLCRGINGVIKANLFISIFLVVAISQDRYCLLVHPMASRRRQRRRQARVTCVLIWVVGGLLSIPTFLLRSIQAVPDLNITACILLLPHEAWHFARIVELNILAFLLPLAAIVFFNYHILASLRGREEVSRTRCGGRKDSKTTALILTLVVAFLVCWAPYHFFAFLEFLFQVQAIRSCFWEDFIDLGLQLANFLAFTNSSLNPVIYVFVGRLFRTKVWELYKQCTPKSLAPISSSHRKEIFQLFWRN.

Residues 1–41 are Extracellular-facing; sequence MASWPPLELQSSNQSQLFPQNATACDNAPEAWDLLHRVLPT. N-linked (GlcNAc...) asparagine glycosylation is found at Asn-13 and Asn-21. The chain crosses the membrane as a helical span at residues 42-62; that stretch reads FIISICSFGLLGNLFVLLVFL. Residues 63–72 lie on the Cytoplasmic side of the membrane; that stretch reads LPRRRLNVAE. The chain crosses the membrane as a helical span at residues 73 to 93; the sequence is IYLANLAASDLVFVLGLPFWA. The Extracellular segment spans residues 94-110; sequence ENIWNQFNWPFGALLCR. An intrachain disulfide couples Cys-109 to Cys-188. A helical membrane pass occupies residues 111–131; that stretch reads GINGVIKANLFISIFLVVAIS. Residues 132-153 lie on the Cytoplasmic side of the membrane; it reads QDRYCLLVHPMASRRRQRRRQA. A helical transmembrane segment spans residues 154–174; sequence RVTCVLIWVVGGLLSIPTFLL. Topologically, residues 175 to 206 are extracellular; sequence RSIQAVPDLNITACILLLPHEAWHFARIVELN. Asn-184 carries N-linked (GlcNAc...) asparagine glycosylation. A helical transmembrane segment spans residues 207-227; that stretch reads ILAFLLPLAAIVFFNYHILAS. Residues 228 to 250 are Cytoplasmic-facing; it reads LRGREEVSRTRCGGRKDSKTTAL. A helical membrane pass occupies residues 251–271; that stretch reads ILTLVVAFLVCWAPYHFFAFL. At 272–294 the chain is on the extracellular side; that stretch reads EFLFQVQAIRSCFWEDFIDLGLQ. A helical transmembrane segment spans residues 295–315; it reads LANFLAFTNSSLNPVIYVFVG. Over 316-352 the chain is Cytoplasmic; that stretch reads RLFRTKVWELYKQCTPKSLAPISSSHRKEIFQLFWRN. Residue Cys-329 is the site of S-palmitoyl cysteine attachment.

It belongs to the G-protein coupled receptor 1 family. Bradykinin receptor subfamily. BDKRB1 sub-subfamily.

It localises to the cell membrane. This is a receptor for bradykinin. Could be a factor in chronic pain and inflammation. The sequence is that of B1 bradykinin receptor (BDKRB1) from Chlorocebus pygerythrus (Vervet monkey).